A 142-amino-acid polypeptide reads, in one-letter code: Large ribosomal subunit protein uL11 (142 aa).

The protein belongs to the universal ribosomal protein uL11 family. Part of the ribosomal stalk of the 50S ribosomal subunit. Interacts with L10 and the large rRNA to form the base of the stalk. L10 forms an elongated spine to which L12 dimers bind in a sequential fashion forming a multimeric L10(L12)X complex. One or more lysine residues are methylated.

Functionally, forms part of the ribosomal stalk which helps the ribosome interact with GTP-bound translation factors. The polypeptide is Large ribosomal subunit protein uL11 (Aeromonas hydrophila subsp. hydrophila (strain ATCC 7966 / DSM 30187 / BCRC 13018 / CCUG 14551 / JCM 1027 / KCTC 2358 / NCIMB 9240 / NCTC 8049)).